The chain runs to 957 residues: PE-PGRS family protein PE_PGRS3 (957 aa).

The region spanning 4–94 (VIAAPEVIAA…GAYAAAEAAA (91 aa)) is the PE domain. Basic residues predominate over residues 893-925 (CRRQRRADRQRRQRRQRRQSRGHARCRRHRRAA). The interval 893–957 (CRRQRRADRQ…GISCSPQMMP (65 aa)) is disordered.

It belongs to the mycobacterial PE family. PGRS subfamily. In terms of processing, a cleavage of the protein removes the N-terminal 120-150 residues, immediately upstream the PGRS domain. The exact position of the cleavage site could not be identified.

The protein localises to the cell outer membrane. It is found in the secreted. Its subcellular location is the cell wall. The protein resides in the cell surface. Its function is as follows. The arginine-rich C-terminal region protrudes from the mycobacterial membrane and mediates M.tuberculosis entry into host epithelial cells. May serve as a bridge between mycobacteria and host cells by interacting with specific host phospholipids and extracting them from host cells, for their direct integration or as a source of phosphate, during phases of TB pathogenesis when M.tuberculosis is short of phosphate supply. The protein is PE-PGRS family protein PE_PGRS3 of Mycobacterium tuberculosis (strain ATCC 25618 / H37Rv).